Reading from the N-terminus, the 36-residue chain is Photosystem I reaction center subunit VIII (36 aa).

The helical transmembrane segment at 6 to 28 (LPSIFVPLVGLMFPAIAMASLSL) threads the bilayer.

It belongs to the PsaI family.

It localises to the plastid. The protein resides in the chloroplast thylakoid membrane. In terms of biological role, may help in the organization of the PsaL subunit. The protein is Photosystem I reaction center subunit VIII of Calycanthus floridus var. glaucus (Eastern sweetshrub).